The primary structure comprises 156 residues: ATP synthase subunit b (156 aa).

Residues 7–29 (LLGQAISFAMFVWFCMKYVWPPI) traverse the membrane as a helical segment.

Belongs to the ATPase B chain family. F-type ATPases have 2 components, F(1) - the catalytic core - and F(0) - the membrane proton channel. F(1) has five subunits: alpha(3), beta(3), gamma(1), delta(1), epsilon(1). F(0) has three main subunits: a(1), b(2) and c(10-14). The alpha and beta chains form an alternating ring which encloses part of the gamma chain. F(1) is attached to F(0) by a central stalk formed by the gamma and epsilon chains, while a peripheral stalk is formed by the delta and b chains.

Its subcellular location is the cell inner membrane. Functionally, f(1)F(0) ATP synthase produces ATP from ADP in the presence of a proton or sodium gradient. F-type ATPases consist of two structural domains, F(1) containing the extramembraneous catalytic core and F(0) containing the membrane proton channel, linked together by a central stalk and a peripheral stalk. During catalysis, ATP synthesis in the catalytic domain of F(1) is coupled via a rotary mechanism of the central stalk subunits to proton translocation. Its function is as follows. Component of the F(0) channel, it forms part of the peripheral stalk, linking F(1) to F(0). This Vibrio vulnificus (strain CMCP6) protein is ATP synthase subunit b.